The chain runs to 250 residues: Ribosomal RNA small subunit methyltransferase J (250 aa).

Residues 101–102 (RD), 117–118 (ER), 153–154 (SS), and Asp-171 each bind S-adenosyl-L-methionine.

It belongs to the methyltransferase superfamily. RsmJ family.

The protein localises to the cytoplasm. The enzyme catalyses guanosine(1516) in 16S rRNA + S-adenosyl-L-methionine = N(2)-methylguanosine(1516) in 16S rRNA + S-adenosyl-L-homocysteine + H(+). Functionally, specifically methylates the guanosine in position 1516 of 16S rRNA. The protein is Ribosomal RNA small subunit methyltransferase J of Shigella dysenteriae serotype 1 (strain Sd197).